A 258-amino-acid chain; its full sequence is Global transcriptional regulator CodY (258 aa).

The segment at 1–156 (MSSLLSKTRR…SATIVGMEML (156 aa)) is GAF domain. The segment at residues 204–223 (ASKIADKVGITRSVIVNALR) is a DNA-binding region (H-T-H motif).

The protein belongs to the CodY family.

It is found in the cytoplasm. DNA-binding global transcriptional regulator which is involved in the adaptive response to starvation and acts by directly or indirectly controlling the expression of numerous genes in response to nutrient availability. During rapid exponential growth, CodY is highly active and represses genes whose products allow adaptation to nutrient depletion. In Clostridium botulinum (strain Alaska E43 / Type E3), this protein is Global transcriptional regulator CodY.